A 402-amino-acid polypeptide reads, in one-letter code: UDP-GlcNAc:betaGal beta-1,3-N-acetylglucosaminyltransferase 9 (402 aa).

At 1-10 (MRRRLRLRRD) the chain is on the cytoplasmic side. The chain crosses the membrane as a helical; Signal-anchor for type II membrane protein span at residues 11 to 27 (ALLTLLLGASLGLLLYA). The Lumenal portion of the chain corresponds to 28-402 (QRDGAAPTAS…VAAGPFQWDS (375 aa)). Residues 32–47 (AAPTASAPRGRGRAAP) show a composition bias toward low complexity. A disordered region spans residues 32 to 83 (AAPTASAPRGRGRAAPRPTPGPRAFQLPDAGAAPPAYEGDTPAPPTPTGPFD).

The protein belongs to the glycosyltransferase 31 family.

Its subcellular location is the golgi apparatus membrane. The sequence is that of UDP-GlcNAc:betaGal beta-1,3-N-acetylglucosaminyltransferase 9 from Homo sapiens (Human).